The chain runs to 365 residues: Mannose-1-phosphate guanylyltransferase catalytic subunit beta (365 aa).

The substrate-binding domain stretch occupies residues 2–221 (KALILVGGYG…PGFWMDVGQP (220 aa)). Residue Asp109 participates in GDP-alpha-D-mannose binding. Asp109 is a Mg(2+) binding site. The active site involves Lys161. Position 217 (Asp217) interacts with GDP-alpha-D-mannose. Mg(2+) is bound at residue Asp217. The tract at residues 244-365 (ETGSNIHPTA…VNVPSKDIIM (122 aa)) is hexapeptide repeat domain.

The protein belongs to the transferase hexapeptide repeat family. As to quaternary structure, component of the GMPPA-GMPPB mannose-1-phosphate guanylyltransferase complex composed of 4 GMPPA subunits and 8 tag-335/GMPPB subunits; the complex is organized into three layers, a central layer made up of 2 GMPPA dimers sandwiched between two layers each made up of 2 tag-335/GMPPB dimers. Catalytic activity of tag-335/GMPPB is reduced when part of the complex and binding of GDP-alpha-D-Mannose by GMPPA induces allosteric feedback inhibition of tag-335/GMPPB. Mg(2+) serves as cofactor.

The enzyme catalyses alpha-D-mannose 1-phosphate + GTP + H(+) = GDP-alpha-D-mannose + diphosphate. The protein operates within nucleotide-sugar biosynthesis; GDP-alpha-D-mannose biosynthesis; GDP-alpha-D-mannose from alpha-D-mannose 1-phosphate (GTP route): step 1/1. Enzyme activity is reduced by incorporation into the GMPPA-GMPPB mannose-1-phosphate guanylyltransferase complex. Allosterically inhibited, when part of the GMPPA-GMPPB complex, by GDP-alpha-D-mannose binding to GMPPA. In terms of biological role, catalytic subunit of the GMPPA-GMPPB mannose-1-phosphate guanylyltransferase complex. Catalyzes the formation of GDP-mannose, an essential precursor of glycan moieties of glycoproteins and glycolipids. Can catalyze the reverse reaction in vitro. Together with GMPPA regulates GDP-alpha-D-mannose levels. This Caenorhabditis elegans protein is Mannose-1-phosphate guanylyltransferase catalytic subunit beta (tag-335).